A 65-amino-acid polypeptide reads, in one-letter code: Large ribosomal subunit protein bL35 (65 aa).

It belongs to the bacterial ribosomal protein bL35 family.

The chain is Large ribosomal subunit protein bL35 from Nitrosomonas europaea (strain ATCC 19718 / CIP 103999 / KCTC 2705 / NBRC 14298).